A 77-amino-acid polypeptide reads, in one-letter code: Conotoxin Vc6b (77 aa).

The signal sequence occupies residues 1–22; the sequence is MKLTCMMIVAVLFLTANTFVTA. Residues 23-47 constitute a propeptide that is removed on maturation; it reads DDSGNGMENLFPKAGHEMENLEASN. Cystine bridges form between Cys-52-Cys-66, Cys-59-Cys-72, and Cys-67-Cys-76.

In terms of tissue distribution, expressed by the venom duct.

Its subcellular location is the secreted. The protein is Conotoxin Vc6b of Conus victoriae (Queen Victoria cone).